Reading from the N-terminus, the 217-residue chain is Twisted gastrulation protein homolog 1-A (217 aa).

The signal sequence occupies residues methionine 1–glycine 26. Asparagine 53 and asparagine 147 each carry an N-linked (GlcNAc...) asparagine glycan.

This sequence belongs to the twisted gastrulation protein family.

The protein localises to the secreted. Its function is as follows. Involved in dorsal-ventral patterning. Appears to function predominantly as a ventralizing factor, through its actions as a BMP signaling agonist, acting through both chd-dependent and chd-independent mechanisms. May also antagonize BMP signaling, probably via formation of ternary complexes with chd and BMPs, resulting in dorsalization. The polypeptide is Twisted gastrulation protein homolog 1-A (twsg1a) (Danio rerio (Zebrafish)).